The primary structure comprises 127 residues: Small ribosomal subunit protein uS12 (127 aa).

Position 89 is a 3-methylthioaspartic acid (Asp89).

It belongs to the universal ribosomal protein uS12 family. In terms of assembly, part of the 30S ribosomal subunit. Contacts proteins S8 and S17. May interact with IF1 in the 30S initiation complex.

In terms of biological role, with S4 and S5 plays an important role in translational accuracy. Interacts with and stabilizes bases of the 16S rRNA that are involved in tRNA selection in the A site and with the mRNA backbone. Located at the interface of the 30S and 50S subunits, it traverses the body of the 30S subunit contacting proteins on the other side and probably holding the rRNA structure together. The combined cluster of proteins S8, S12 and S17 appears to hold together the shoulder and platform of the 30S subunit. The protein is Small ribosomal subunit protein uS12 of Aliarcobacter butzleri (strain RM4018) (Arcobacter butzleri).